Consider the following 289-residue polypeptide: Nodulation protein NolT (289 aa).

The signal sequence occupies residues 1 to 33 (MFGSAHGDTTSSDTSGRRPLRLVVLPLLLALSS). A lipid anchor (N-palmitoyl cysteine) is attached at cysteine 34. A lipid anchor (S-diacylglycerol cysteine) is attached at cysteine 34. A helical membrane pass occupies residues 233-253 (VAVGVGAAVFAVTCYLLFIVL).

It belongs to the YscJ lipoprotein family.

Its subcellular location is the cell outer membrane. Its function is as follows. Regulates cultivar-specific nodulation of soybean. This chain is Nodulation protein NolT (nolT), found in Rhizobium fredii (Sinorhizobium fredii).